The sequence spans 153 residues: Pheromone-binding protein Gp-9 (153 aa).

Residues M1 to A19 form the signal peptide. Disulfide bonds link C37-C77, C73-C129, and C118-C138.

It belongs to the PBP/GOBP family. As to quaternary structure, homodimer.

The protein localises to the secreted. Colony queen number, a major feature of social organization, is associated with worker genotype for Gp-9. Colonies are headed by either a single reproductive queen (monogyne form) or multiple queens (polygyne form). Differences in worker Gp-9 genotypes between social forms may cause differences in workers' abilities to recognize queens and regulate their numbers. This Solenopsis n. sp. (strain JP-2002) (Fire ant) protein is Pheromone-binding protein Gp-9.